The following is a 228-amino-acid chain: NAD(P)H-hydrate epimerase (228 aa).

Residues 9–209 (VRAVERLAHR…LLGLTPAFLA (201 aa)) form the YjeF N-terminal domain. 53 to 57 (NNGGD) serves as a coordination point for (6S)-NADPHX. The K(+) site is built by asparagine 54 and aspartate 115. Residues 119-125 (GIGLARP) and aspartate 148 each bind (6S)-NADPHX. Serine 151 serves as a coordination point for K(+).

The protein belongs to the NnrE/AIBP family. The cofactor is K(+).

The catalysed reaction is (6R)-NADHX = (6S)-NADHX. The enzyme catalyses (6R)-NADPHX = (6S)-NADPHX. Its function is as follows. Catalyzes the epimerization of the S- and R-forms of NAD(P)HX, a damaged form of NAD(P)H that is a result of enzymatic or heat-dependent hydration. This is a prerequisite for the S-specific NAD(P)H-hydrate dehydratase to allow the repair of both epimers of NAD(P)HX. This Bordetella pertussis (strain CS) protein is NAD(P)H-hydrate epimerase.